Reading from the N-terminus, the 364-residue chain is Aminomethyltransferase (364 aa).

It belongs to the GcvT family. The glycine cleavage system is composed of four proteins: P, T, L and H.

It catalyses the reaction N(6)-[(R)-S(8)-aminomethyldihydrolipoyl]-L-lysyl-[protein] + (6S)-5,6,7,8-tetrahydrofolate = N(6)-[(R)-dihydrolipoyl]-L-lysyl-[protein] + (6R)-5,10-methylene-5,6,7,8-tetrahydrofolate + NH4(+). In terms of biological role, the glycine cleavage system catalyzes the degradation of glycine. In Shigella boydii serotype 18 (strain CDC 3083-94 / BS512), this protein is Aminomethyltransferase.